Here is a 201-residue protein sequence, read N- to C-terminus: Large ribosomal subunit protein bL25 (201 aa).

The protein belongs to the bacterial ribosomal protein bL25 family. CTC subfamily. In terms of assembly, part of the 50S ribosomal subunit; part of the 5S rRNA/L5/L18/L25 subcomplex. Contacts the 5S rRNA. Binds to the 5S rRNA independently of L5 and L18.

Its function is as follows. This is one of the proteins that binds to the 5S RNA in the ribosome where it forms part of the central protuberance. The protein is Large ribosomal subunit protein bL25 of Ectopseudomonas mendocina (strain ymp) (Pseudomonas mendocina).